We begin with the raw amino-acid sequence, 206 residues long: Small ribosomal subunit protein uS4 (206 aa).

The interval 18-46 (NIWGRPKSPVNRREYGPGQHGQRRKGKIS) is disordered. Residues 94-154 (RRLDAVVYRA…DRSKQMVALI (61 aa)) enclose the S4 RNA-binding domain.

It belongs to the universal ribosomal protein uS4 family. In terms of assembly, part of the 30S ribosomal subunit. Contacts protein S5. The interaction surface between S4 and S5 is involved in control of translational fidelity.

Functionally, one of the primary rRNA binding proteins, it binds directly to 16S rRNA where it nucleates assembly of the body of the 30S subunit. Its function is as follows. With S5 and S12 plays an important role in translational accuracy. The protein is Small ribosomal subunit protein uS4 of Roseobacter denitrificans (strain ATCC 33942 / OCh 114) (Erythrobacter sp. (strain OCh 114)).